Here is a 413-residue protein sequence, read N- to C-terminus: Probable cysteine desulfurase (413 aa).

Lysine 229 carries the post-translational modification N6-(pyridoxal phosphate)lysine. The active-site Cysteine persulfide intermediate is cysteine 368.

Belongs to the class-V pyridoxal-phosphate-dependent aminotransferase family. Csd subfamily. It depends on pyridoxal 5'-phosphate as a cofactor.

The enzyme catalyses (sulfur carrier)-H + L-cysteine = (sulfur carrier)-SH + L-alanine. In terms of biological role, catalyzes the removal of elemental sulfur and selenium atoms from L-cysteine, L-cystine, L-selenocysteine, and L-selenocystine to produce L-alanine. The sequence is that of Probable cysteine desulfurase (csd) from Staphylococcus epidermidis (strain ATCC 12228 / FDA PCI 1200).